Here is an 884-residue protein sequence, read N- to C-terminus: MLTVNDIRQKFLGYFKNYNHQEIPSSSLIPRDDPSLLFTNAGMVQFKKVFTGQETRNYLRATTAQKCLRVGGKHNDLENVGRTARHHTFFEMLGNFSFGDYFKKEAIQFAWAFITEELNLSKEFLYITIYKDDDDAYDIWVNTIGVEPSRIYRMGEKDNFWSMGDTGPCGPCSEIHFDQGETFCCGDNCGIGSCDCDRFLEIWNLVFMQYEQLPSGERVILPKPSIDTGMGLERIVAICQQKSSNYDTDLFQPIIQYMASIAGVHYKKHEETDIALRVIADHSRAIAFMIADGILPSNEGRGYVLRRLIRRAFRFGKQIGMNQPFLYKTVNKVVELMGDIYTELYSRSEFMSRVVFDEEERFSITLDKGLILLEAELNALKEKNTKELPGDIAFKLYDTYGFPLDIINDIASKKHFAVDEANFQHLMQEQKERARSQWKGSGEKRIEACFQTLLEDGMQSEFIGYENLSGTGRIVALLDIDGLPIEELPTKSSGYVITDMTPFYGTSGGQTGDIGILSTITGKTQVVDTLKPATNLIVHVVTVTSGTILLDQEALLVVSESERLDTARNHTCTHILQSVLQKILGDHVRQAGSLVSPTRLRFDFTHIAPLTEEEIHAIELQVNTIIMANLPLRVEFMDQQSALEKGAMALFEEKYGNIVRVVTIGSENQTASIELCGGTHLTSTGQAGCFIIVSETGIAAGVRRIEAITGRNTLAYIKEYQKELSTTAAILKTKPEKVVEKVTSILSENKNLQKTVDTLESSSLSNQGKHLLDNLTRINNIDVLTANLKNFSLKALRDIMDDIRSKLSSGIVCLASTEGTKVHLLLYVSKDLHHNFTASELIKKIVVPIHGAGGGRPDQAQAGGTNPSGLSETFELLKNILEDQ.

Zn(2+)-binding residues include His-570, His-574, Cys-676, and His-680.

This sequence belongs to the class-II aminoacyl-tRNA synthetase family. Zn(2+) is required as a cofactor.

It localises to the cytoplasm. It catalyses the reaction tRNA(Ala) + L-alanine + ATP = L-alanyl-tRNA(Ala) + AMP + diphosphate. Its function is as follows. Catalyzes the attachment of alanine to tRNA(Ala) in a two-step reaction: alanine is first activated by ATP to form Ala-AMP and then transferred to the acceptor end of tRNA(Ala). Also edits incorrectly charged Ser-tRNA(Ala) and Gly-tRNA(Ala) via its editing domain. In Lawsonia intracellularis (strain PHE/MN1-00), this protein is Alanine--tRNA ligase.